The chain runs to 675 residues: Gastrula zinc finger protein xFG20-1 (675 aa).

C2H2-type zinc fingers lie at residues 62–84 (FTCT…IRAH), 90–112 (FSCM…YSVH), 118–140 (FSCT…LRVH), 146–168 (YSCE…QRTH), 174–196 (FSCT…LKTH), 202–224 (HLCA…QKIH), 257–279 (FPCT…QSTH), 286–308 (FPCT…QSTH), 344–366 (LPCT…QSTH), and 373–395 (LPCT…QSTH). The segment at 302–325 (RTHQSTHTEGQKSLPSTESGGTFS) is disordered. Over residues 304–325 (HQSTHTEGQKSLPSTESGGTFS) the composition is skewed to polar residues. The span at 390 to 407 (THQSTHTSPSTEFGVQTT) shows a compositional bias: polar residues. The segment at 390–423 (THQSTHTSPSTEFGVQTTEDNHQSPSKDHTGEKP) is disordered. A compositionally biased stretch (basic and acidic residues) spans 408–421 (EDNHQSPSKDHTGE). 8 C2H2-type zinc fingers span residues 424-446 (FSCS…LVVH), 452-474 (YHCI…QRTH), 480-501 (FSCN…YRVH), 507-529 (YPCT…YKVH), 535-557 (YPCQ…LRTH), 563-585 (FSCT…LTTH), 591-613 (FSCT…YKMH), and 619-642 (FTCT…TTVH).

Belongs to the krueppel C2H2-type zinc-finger protein family.

It localises to the nucleus. In terms of biological role, may be involved in transcriptional regulation. The protein is Gastrula zinc finger protein xFG20-1 of Xenopus laevis (African clawed frog).